The chain runs to 416 residues: S-layer protein B (416 aa).

The N-terminal stretch at 1–20 (MKYNLLPLILLSLLVAPLLA) is a signal peptide. A coiled-coil region spans residues 310 to 330 (IASLNSTIQSLESQISSLSST). Residues 392 to 412 (IALAVSIIAIIISIVVLILVF) form a helical membrane-spanning segment.

It belongs to the Sulfolobales SlaB family. As to quaternary structure, the mushroom-shaped unit cells of the Sulfolobales' S-layers may consist of three SlaB subunits and six SlaA subunits.

The protein localises to the secreted. Its subcellular location is the cell wall. The protein resides in the S-layer. It is found in the cell membrane. Its function is as follows. S-layer small protein. May anchor the complex to the cell membrane. In Metallosphaera sedula (strain ATCC 51363 / DSM 5348 / JCM 9185 / NBRC 15509 / TH2), this protein is S-layer protein B.